A 161-amino-acid chain; its full sequence is 6,7-dimethyl-8-ribityllumazine synthase (161 aa).

5-amino-6-(D-ribitylamino)uracil-binding positions include Phe-23, 61-63 (SFE), and 85-87 (AVI). A (2S)-2-hydroxy-3-oxobutyl phosphate-binding site is contributed by 90–91 (DT). The Proton donor role is filled by His-93. A 5-amino-6-(D-ribitylamino)uracil-binding site is contributed by Phe-118. Arg-132 lines the (2S)-2-hydroxy-3-oxobutyl phosphate pocket.

It belongs to the DMRL synthase family.

It catalyses the reaction (2S)-2-hydroxy-3-oxobutyl phosphate + 5-amino-6-(D-ribitylamino)uracil = 6,7-dimethyl-8-(1-D-ribityl)lumazine + phosphate + 2 H2O + H(+). It functions in the pathway cofactor biosynthesis; riboflavin biosynthesis; riboflavin from 2-hydroxy-3-oxobutyl phosphate and 5-amino-6-(D-ribitylamino)uracil: step 1/2. Functionally, catalyzes the formation of 6,7-dimethyl-8-ribityllumazine by condensation of 5-amino-6-(D-ribitylamino)uracil with 3,4-dihydroxy-2-butanone 4-phosphate. This is the penultimate step in the biosynthesis of riboflavin. The chain is 6,7-dimethyl-8-ribityllumazine synthase from Synechococcus sp. (strain WH7803).